Reading from the N-terminus, the 772-residue chain is Phenylalanine--tRNA ligase beta subunit (772 aa).

One can recognise a tRNA-binding domain in the interval I40–F158. In terms of domain architecture, B5 spans S397–P468. The Mg(2+) site is built by D446, D452, E455, and D456. The FDX-ACB domain occupies S691–F772.

It belongs to the phenylalanyl-tRNA synthetase beta subunit family. Type 1 subfamily. In terms of assembly, tetramer of two alpha and two beta subunits. It depends on Mg(2+) as a cofactor.

The protein resides in the cytoplasm. It carries out the reaction tRNA(Phe) + L-phenylalanine + ATP = L-phenylalanyl-tRNA(Phe) + AMP + diphosphate + H(+). The polypeptide is Phenylalanine--tRNA ligase beta subunit (pheT) (Ureaplasma parvum serovar 3 (strain ATCC 700970)).